We begin with the raw amino-acid sequence, 370 residues long: Cobalt-precorrin-5B C(1)-methyltransferase (370 aa).

The protein belongs to the CbiD family.

The catalysed reaction is Co-precorrin-5B + S-adenosyl-L-methionine = Co-precorrin-6A + S-adenosyl-L-homocysteine. Its pathway is cofactor biosynthesis; adenosylcobalamin biosynthesis; cob(II)yrinate a,c-diamide from sirohydrochlorin (anaerobic route): step 6/10. Catalyzes the methylation of C-1 in cobalt-precorrin-5B to form cobalt-precorrin-6A. The polypeptide is Cobalt-precorrin-5B C(1)-methyltransferase (Pseudomonas syringae pv. tomato (strain ATCC BAA-871 / DC3000)).